The chain runs to 493 residues: Probable cytosol aminopeptidase (493 aa).

Residues lysine 257 and aspartate 262 each coordinate Mn(2+). Lysine 269 is an active-site residue. Mn(2+)-binding residues include aspartate 281, aspartate 341, and glutamate 343. Residue arginine 345 is part of the active site.

It belongs to the peptidase M17 family. The cofactor is Mn(2+).

The protein resides in the cytoplasm. It catalyses the reaction Release of an N-terminal amino acid, Xaa-|-Yaa-, in which Xaa is preferably Leu, but may be other amino acids including Pro although not Arg or Lys, and Yaa may be Pro. Amino acid amides and methyl esters are also readily hydrolyzed, but rates on arylamides are exceedingly low.. The enzyme catalyses Release of an N-terminal amino acid, preferentially leucine, but not glutamic or aspartic acids.. In terms of biological role, presumably involved in the processing and regular turnover of intracellular proteins. Catalyzes the removal of unsubstituted N-terminal amino acids from various peptides. This Synechococcus sp. (strain WH7803) protein is Probable cytosol aminopeptidase.